The primary structure comprises 140 residues: UPF0306 protein YhbP (140 aa).

This sequence belongs to the UPF0306 family.

The polypeptide is UPF0306 protein YhbP (Escherichia coli O6:H1 (strain CFT073 / ATCC 700928 / UPEC)).